The following is a 339-amino-acid chain: Putative ABC transporter ATP-binding protein MG467 homolog (339 aa).

The segment at 41–87 is disordered; it reads KKTKKAKPAKVKKVKEPKAKAVKPEQVKPTKTTKAPKPKKPKKQGGL. The segment covering 42-53 has biased composition (basic residues); that stretch reads KTKKAKPAKVKK. Residues 54-68 show a composition bias toward basic and acidic residues; sequence VKEPKAKAVKPEQVK. Residues 74-83 are compositionally biased toward basic residues; sequence KAPKPKKPKK. The ABC transporter domain occupies 112–338; sequence ISIDKMWKHV…IVSNELVRPL (227 aa). ATP is bound at residue 150–157; sequence GPSGSGKT.

The protein belongs to the ABC transporter superfamily.

This chain is Putative ABC transporter ATP-binding protein MG467 homolog, found in Mycoplasma pneumoniae (strain ATCC 29342 / M129 / Subtype 1) (Mycoplasmoides pneumoniae).